The primary structure comprises 23 residues: PAWLVDCPCVGDDVNFILTRGQK.

Residue Pro-1 is a propeptide. A cross-link (cyclopeptide (Ala-Pro)) is located at residues 2–8 (AWLVDCP). The segment at residues 3-7 (WLVDC) is a cross-link (2'-cysteinyl-6'-hydroxytryptophan sulfoxide (Trp-Cys)). A propeptide spanning residues 9–23 (CVGDDVNFILTRGQK) is cleaved from the precursor.

It belongs to the MSDIN fungal toxin family. Processed by the macrocyclase-peptidase enzyme POPB to yield a toxic cyclic heptapeptide. POPB first removes 10 residues from the N-terminus. Conformational trapping of the remaining peptide forces the enzyme to release this intermediate rather than proceed to macrocyclization. The enzyme rebinds the remaining peptide in a different conformation and catalyzes macrocyclization of the N-terminal 7 residues.

In terms of biological role, major toxin that belongs to the bicyclic heptapeptides called phallotoxins. Although structurally related to amatoxins, phallotoxins have a different mode of action, which is the stabilization of F-actin. Phallotoxins are poisonous when administered parenterally, but not orally because of poor absorption. The chain is Phallacidin proprotein from Amanita fuligineoides.